The following is a 496-amino-acid chain: Glycerol kinase (496 aa).

Threonine 12 provides a ligand contact to ADP. The ATP site is built by threonine 12, threonine 13, and serine 14. Residue threonine 12 coordinates sn-glycerol 3-phosphate. Position 16 (arginine 16) interacts with ADP. Arginine 82, glutamate 83, and tyrosine 134 together coordinate sn-glycerol 3-phosphate. Glycerol-binding residues include arginine 82, glutamate 83, and tyrosine 134. Position 230 is a phosphohistidine; by HPr (histidine 230). Sn-glycerol 3-phosphate is bound at residue aspartate 244. Positions 244 and 245 each coordinate glycerol. Residues threonine 266 and glycine 309 each coordinate ADP. Positions 266, 309, 313, and 410 each coordinate ATP. Glycine 410 and asparagine 414 together coordinate ADP.

This sequence belongs to the FGGY kinase family. As to quaternary structure, homotetramer and homodimer (in equilibrium). Post-translationally, the phosphoenolpyruvate-dependent sugar phosphotransferase system (PTS), including enzyme I, and histidine-containing protein (HPr) are required for the phosphorylation, which leads to the activation of the enzyme.

The catalysed reaction is glycerol + ATP = sn-glycerol 3-phosphate + ADP + H(+). It participates in polyol metabolism; glycerol degradation via glycerol kinase pathway; sn-glycerol 3-phosphate from glycerol: step 1/1. Activated by phosphorylation and inhibited by fructose 1,6-bisphosphate (FBP). Its function is as follows. Key enzyme in the regulation of glycerol uptake and metabolism. Catalyzes the phosphorylation of glycerol to yield sn-glycerol 3-phosphate. This is Glycerol kinase from Bacillus thuringiensis (strain Al Hakam).